A 406-amino-acid chain; its full sequence is Homocysteine-responsive endoplasmic reticulum-resident ubiquitin-like domain member 2 protein (406 aa).

Residues 10–89 form the Ubiquitin-like domain; the sequence is VTLIIKAPNQ…HMVHLVCTSR (80 aa). Residues 86 to 156 are disordered; the sequence is CTSRTPPSSP…PQAQTDPAQS (71 aa). 2 stretches are compositionally biased toward low complexity: residues 87-98 and 109-139; these read TSRTPPSSPKSS and SNSNSSSDQSGSSTPSSSQETLTLATSSSSE. Polar residues predominate over residues 145 to 156; that stretch reads TLPQAQTDPAQS. The helical transmembrane segment at 302–322 threads the bilayer; sequence FIMVMGAMLLVYLHQAGWFPF.

It is found in the membrane. Its function is as follows. Could be involved in the unfolded protein response (UPR) pathway. This chain is Homocysteine-responsive endoplasmic reticulum-resident ubiquitin-like domain member 2 protein (HERPUD2), found in Bos taurus (Bovine).